The primary structure comprises 690 residues: Serotransferrin-1 (690 aa).

Positions 1–18 are cleaved as a signal peptide; sequence MKLLLLSALLGCLATAYA. Transferrin-like domains follow at residues 25 to 329 and 340 to 669; these read VKWC…SLKK and IKWC…SLRK. Cysteines 28 and 50 form a disulfide. Residues Asp74 and Tyr104 each contribute to the Fe(3+) site. Cystine bridges form between Cys127/Cys207, Cys172/Cys186, and Cys235/Cys249. Positions 129, 134, 136, and 137 each coordinate hydrogencarbonate. An N-linked (GlcNAc...) asparagine glycan is attached at Asn169. Position 201 (Tyr201) interacts with Fe(3+). His257 contacts Fe(3+). Cystine bridges form between Cys343–Cys379 and Cys353–Cys370. Asp394 and Tyr428 together coordinate Fe(3+). 7 disulfide bridges follow: Cys404–Cys681, Cys419–Cys642, Cys451–Cys529, Cys475–Cys670, Cys485–Cys499, Cys496–Cys512, and Cys569–Cys583. Thr453, Arg457, Ala459, and Gly460 together coordinate hydrogencarbonate. Residue Tyr523 coordinates Fe(3+). His591 lines the Fe(3+) pocket.

Belongs to the transferrin family. As to quaternary structure, monomer. As to expression, abundant in liver and serum with smaller amounts found in the stomach and kidney.

The protein resides in the secreted. Functionally, transferrins are iron binding transport proteins which can bind two Fe(3+) ions in association with the binding of an anion, usually bicarbonate. It is responsible for the transport of iron from sites of absorption and heme degradation to those of storage and utilization. Serum transferrin may also have a further role in stimulating cell proliferation. The protein is Serotransferrin-1 (tf1) of Salmo salar (Atlantic salmon).